The chain runs to 323 residues: Isoeugenol synthase 1 (323 aa).

NADP(+)-binding positions include 14–17, 36–47, 88–90, 113–115, lysine 135, and 155–157; these read TGYL, VMPLKKNSDDSK, VPQ, SEF, and NSL. Residue lysine 135 is the Proton donor/acceptor of the active site.

This sequence belongs to the NmrA-type oxidoreductase family. Expressed in flowers, especially in corolla and tubes of petals, probably in both epidermal and mesophyll cell layers.

The catalysed reaction is (E)-isoeugenol + acetate + NADP(+) = (E)-coniferyl acetate + NADPH. Its pathway is aromatic compound metabolism; phenylpropanoid biosynthesis. With respect to regulation, inhibited by zinc and copper ions. Repressed by 4-bromo-cinnamyl acetate. Involved in the biosynthesis of the floral volatile isoeugenol. Catalyzes the synthesis of the phenylpropene isoeugenol from coniferyl acetate. Phenylpropenes are the primary constituents of various essential plant oils. They are produced as antimicrobial and antianimal compounds, or as floral attractants of pollinators. Isoeugenol is a characteristic aromatic constituent of spices and a floral volatile compound. In Petunia hybrida (Petunia), this protein is Isoeugenol synthase 1.